A 286-amino-acid polypeptide reads, in one-letter code: Pantothenate synthetase (286 aa).

Residue methionine 30–histidine 37 coordinates ATP. Histidine 37 acts as the Proton donor in catalysis. Glutamine 61 contributes to the (R)-pantoate binding site. Glutamine 61 contributes to the beta-alanine binding site. Glycine 149–aspartate 152 is an ATP binding site. Glutamine 155 lines the (R)-pantoate pocket. Residues valine 178 and leucine 186–arginine 189 each bind ATP.

Belongs to the pantothenate synthetase family. As to quaternary structure, homodimer.

It localises to the cytoplasm. It carries out the reaction (R)-pantoate + beta-alanine + ATP = (R)-pantothenate + AMP + diphosphate + H(+). It functions in the pathway cofactor biosynthesis; (R)-pantothenate biosynthesis; (R)-pantothenate from (R)-pantoate and beta-alanine: step 1/1. Functionally, catalyzes the condensation of pantoate with beta-alanine in an ATP-dependent reaction via a pantoyl-adenylate intermediate. The chain is Pantothenate synthetase from Pseudomonas fluorescens (strain ATCC BAA-477 / NRRL B-23932 / Pf-5).